The following is a 164-amino-acid chain: Crossover junction endodeoxyribonuclease RuvC (164 aa).

Active-site residues include Asp7, Glu67, and Asp140. 3 residues coordinate Mg(2+): Asp7, Glu67, and Asp140.

The protein belongs to the RuvC family. In terms of assembly, homodimer which binds Holliday junction (HJ) DNA. The HJ becomes 2-fold symmetrical on binding to RuvC with unstacked arms; it has a different conformation from HJ DNA in complex with RuvA. In the full resolvosome a probable DNA-RuvA(4)-RuvB(12)-RuvC(2) complex forms which resolves the HJ. Mg(2+) serves as cofactor.

Its subcellular location is the cytoplasm. The enzyme catalyses Endonucleolytic cleavage at a junction such as a reciprocal single-stranded crossover between two homologous DNA duplexes (Holliday junction).. Functionally, the RuvA-RuvB-RuvC complex processes Holliday junction (HJ) DNA during genetic recombination and DNA repair. Endonuclease that resolves HJ intermediates. Cleaves cruciform DNA by making single-stranded nicks across the HJ at symmetrical positions within the homologous arms, yielding a 5'-phosphate and a 3'-hydroxyl group; requires a central core of homology in the junction. The consensus cleavage sequence is 5'-(A/T)TT(C/G)-3'. Cleavage occurs on the 3'-side of the TT dinucleotide at the point of strand exchange. HJ branch migration catalyzed by RuvA-RuvB allows RuvC to scan DNA until it finds its consensus sequence, where it cleaves and resolves the cruciform DNA. This chain is Crossover junction endodeoxyribonuclease RuvC, found in Finegoldia magna (strain ATCC 29328 / DSM 20472 / WAL 2508) (Peptostreptococcus magnus).